A 509-amino-acid chain; its full sequence is Maturase K (509 aa).

It belongs to the intron maturase 2 family. MatK subfamily.

Its subcellular location is the plastid. The protein resides in the chloroplast. In terms of biological role, usually encoded in the trnK tRNA gene intron. Probably assists in splicing its own and other chloroplast group II introns. This Anthocercis viscosa (Sticky tailflower) protein is Maturase K.